Here is a 110-residue protein sequence, read N- to C-terminus: Large ribosomal subunit protein uL22 (110 aa).

This sequence belongs to the universal ribosomal protein uL22 family. In terms of assembly, part of the 50S ribosomal subunit.

Its function is as follows. This protein binds specifically to 23S rRNA; its binding is stimulated by other ribosomal proteins, e.g. L4, L17, and L20. It is important during the early stages of 50S assembly. It makes multiple contacts with different domains of the 23S rRNA in the assembled 50S subunit and ribosome. Functionally, the globular domain of the protein is located near the polypeptide exit tunnel on the outside of the subunit, while an extended beta-hairpin is found that lines the wall of the exit tunnel in the center of the 70S ribosome. In Nitrosomonas europaea (strain ATCC 19718 / CIP 103999 / KCTC 2705 / NBRC 14298), this protein is Large ribosomal subunit protein uL22.